Consider the following 122-residue polypeptide: MIQQQTRLKVADNSGAKEIMCIRVLGGSHRKWGNIGDVIVASVKSATPGGVVKKGEVVKAVIVRSVKGLRRADGSYIKFDENAAVIIKDDKNPKGTRIFGPVARELRDKEFNKILSLAPEVL.

This sequence belongs to the universal ribosomal protein uL14 family. In terms of assembly, part of the 50S ribosomal subunit. Forms a cluster with proteins L3 and L19. In the 70S ribosome, L14 and L19 interact and together make contacts with the 16S rRNA in bridges B5 and B8.

In terms of biological role, binds to 23S rRNA. Forms part of two intersubunit bridges in the 70S ribosome. The polypeptide is Large ribosomal subunit protein uL14 (Clostridium botulinum (strain 657 / Type Ba4)).